We begin with the raw amino-acid sequence, 256 residues long: Major prion protein 2 (256 aa).

The first 24 residues, Met1–Cys24, serve as a signal peptide directing secretion. The tract at residues Lys25 to Ala233 is interaction with GRB2, ERI3 and SYN1. The interval Pro28 to Thr110 is disordered. Tandem repeats lie at residues Pro54 to Gln62, Pro63 to Gln70, Pro71 to Gln78, Pro79 to Gln86, and Pro87 to Gln95. Residues Pro54–Gln95 form a 5 X 8 AA tandem repeats of P-H-G-G-G-W-G-Q region. Gly residues predominate over residues Gly58 to His99. Positions 64, 65, 66, 72, 74, 80, 81, 82, 88, 90, and 91 each coordinate Cu(2+). Cysteines 182 and 217 form a disulfide. Asn184 and Asn200 each carry an N-linked (GlcNAc...) asparagine glycan. Ala233 carries the GPI-anchor amidated alanine lipid modification. A propeptide spans Ser234–Gly256 (removed in mature form).

This sequence belongs to the prion family. In terms of assembly, monomer and homodimer. Has a tendency to aggregate into amyloid fibrils containing a cross-beta spine, formed by a steric zipper of superposed beta-strands. Soluble oligomers may represent an intermediate stage on the path to fibril formation. Copper binding may promote oligomerization. Interacts with GRB2, APP, ERI3/PRNPIP and SYN1. Mislocalized cytosolically exposed PrP interacts with MGRN1; this interaction alters MGRN1 subcellular location and causes lysosomal enlargement. Interacts with KIAA1191.

The protein localises to the cell membrane. It localises to the golgi apparatus. In terms of biological role, its primary physiological function is unclear. Has cytoprotective activity against internal or environmental stresses. May play a role in neuronal development and synaptic plasticity. May be required for neuronal myelin sheath maintenance. May play a role in iron uptake and iron homeostasis. Soluble oligomers are toxic to cultured neuroblastoma cells and induce apoptosis (in vitro). Association with GPC1 (via its heparan sulfate chains) targets PRNP to lipid rafts. Also provides Cu(2+) or Zn(2+) for the ascorbate-mediated GPC1 deaminase degradation of its heparan sulfate side chains. This chain is Major prion protein 2, found in Tragelaphus strepsiceros (Greater kudu).